A 185-amino-acid polypeptide reads, in one-letter code: Serine/arginine-rich splicing factor RSZ21A (185 aa).

Positions 2–73 (ARVYVGNLDP…WRVELSRNAS (72 aa)) constitute an RRM domain. The CCHC-type zinc-finger motif lies at 87 to 104 (SKCYECGETGHFARECRL). Residues 109–185 (GGLGSGRRRS…YDNGYRRSRS (77 aa)) form a disordered region. Basic residues predominate over residues 114 to 131 (GRRRSRSRSRSRSPRYRR). Low complexity-rich tracts occupy residues 132–145 (SPSY…PAGR) and 152–163 (VSPARARSYSRS).

It belongs to the splicing factor SR family. Extensively phosphorylated on serine residues in the RS domain. In terms of tissue distribution, expressed in roots, leaves and immature seeds.

The protein localises to the nucleus. Functionally, involved in pre-mRNA splicing. This Oryza sativa subsp. japonica (Rice) protein is Serine/arginine-rich splicing factor RSZ21A (RSZ21A).